Reading from the N-terminus, the 37-residue chain is Non-structural protein 6 (37 aa).

This sequence belongs to the rotavirus A NSP6 family. In terms of assembly, interacts with NSP2 and NSP5.

It localises to the host cytoplasm. Its subcellular location is the host mitochondrion. This Rotavirus A (strain RVA/Human/United States/D/1974/G1P1A[8]) (RV-A) protein is Non-structural protein 6.